The following is a 388-amino-acid chain: uncharacterized protein (388 aa).

Positions 68–96 (KVDRMSEEEERMAIATRKAKEVAKELSET) form a coiled coil. The disordered stretch occupies residues 162–388 (GSHPLVREFN…PPQQDWFDSV (227 aa)). Basic and acidic residues-rich tracts occupy residues 166 to 176 (LVREFNGEKPP) and 196 to 208 (ATDKKTGSKQSDK). Residues 233 to 251 (GVKHQHAIRRDDRHRHGMR) show a composition bias toward basic residues. Low complexity-rich tracts occupy residues 265 to 279 (QQQQCPVQGQQSRGQ) and 293 to 346 (QRRP…QRPA).

This is an uncharacterized protein from Frog virus 3 (isolate Goorha) (FV-3).